The primary structure comprises 207 residues: Large ribosomal subunit protein uL4 (207 aa).

A disordered region spans residues 62–85 (KKPFKQKGTGQARQGCRRAPQYPG).

This sequence belongs to the universal ribosomal protein uL4 family. As to quaternary structure, part of the 50S ribosomal subunit.

Its function is as follows. One of the primary rRNA binding proteins, this protein initially binds near the 5'-end of the 23S rRNA. It is important during the early stages of 50S assembly. It makes multiple contacts with different domains of the 23S rRNA in the assembled 50S subunit and ribosome. In terms of biological role, forms part of the polypeptide exit tunnel. The sequence is that of Large ribosomal subunit protein uL4 from Geobacter sp. (strain M21).